A 196-amino-acid chain; its full sequence is SAGA-associated factor 11 homolog (196 aa).

The disordered stretch occupies residues 1–22 (MSAANMPTTTGAQGSGNQVPTT). The segment at 106 to 127 (CTCPNCDRLVAAARFAPHLEKC) adopts an SGF11-type zinc-finger fold. Positions 144 to 196 (TKEGASSAHLHSAGNAGGTDDEDDVDWSSDKRRKKSNQNSRNNGSKKNNGKTF) are disordered. Position 172 is a phosphoserine (Ser172). Positions 180-196 (NQNSRNNGSKKNNGKTF) are enriched in low complexity.

This sequence belongs to the SGF11 family. Component of some SAGA transcription coactivator-HAT complexes, at least composed of Ada2b, not/nonstop, Pcaf/Gcn5, Sgf11 and Spt3. Within the SAGA complex, Sgf11, e(y)2, and not/nonstop form an additional subcomplex of SAGA called the DUB module (deubiquitination module). Interacts directly with not/nonstop. Interacts with the AMEX complex component xmas-2. Interacts with Cbp80; important for promoter recruitment of Sgf11 that is not associated with the DUB module.

It localises to the nucleus. It is found in the nucleoplasm. The protein localises to the cytoplasm. In terms of biological role, component of the transcription regulatory histone acetylation (HAT) complex SAGA, a multiprotein complex that activates transcription by remodeling chromatin and mediating histone acetylation and deubiquitination. Within the SAGA complex, participates in a subcomplex that specifically deubiquitinates histone H2B. The SAGA complex is recruited to specific gene promoters by activators, where it is required for transcription. Required for nuclear receptor-mediated transactivation. Binds independently on SAGA to promoters in an RNA-dependent manner. Binds to mRNA and is essential for total mRNA export from the nucleus. Required to counteract heterochromatin silencing. Controls the development of neuronal connectivity in visual system by being required for accurate axon targeting in the optic lobe. Required for expression of ecdysone-induced genes such as br/broad. This chain is SAGA-associated factor 11 homolog, found in Drosophila yakuba (Fruit fly).